Here is a 234-residue protein sequence, read N- to C-terminus: Large ribosomal subunit protein uL1 (234 aa).

It belongs to the universal ribosomal protein uL1 family. As to quaternary structure, part of the 50S ribosomal subunit.

In terms of biological role, binds directly to 23S rRNA. The L1 stalk is quite mobile in the ribosome, and is involved in E site tRNA release. Protein L1 is also a translational repressor protein, it controls the translation of the L11 operon by binding to its mRNA. The polypeptide is Large ribosomal subunit protein uL1 (Baumannia cicadellinicola subsp. Homalodisca coagulata).